The sequence spans 507 residues: Maturase K (507 aa).

Belongs to the intron maturase 2 family. MatK subfamily.

The protein resides in the plastid. It localises to the chloroplast. Its function is as follows. Usually encoded in the trnK tRNA gene intron. Probably assists in splicing its own and other chloroplast group II introns. This Kalmia procumbens (Alpine azalea) protein is Maturase K.